The sequence spans 467 residues: Gamma-aminobutyric acid receptor subunit gamma-2 (467 aa).

An N-terminal signal peptide occupies residues 1–39; that stretch reads MSSPNIWSTGSSVYSTPVFSQKMTVWILLLLSLYPGFTS. Topologically, residues 40-275 are extracellular; the sequence is QKSDDDYEDY…FDLSRRMGYF (236 aa). N52 and N129 each carry an N-linked (GlcNAc...) asparagine glycan. C190 and C204 form a disulfide bridge. The N-linked (GlcNAc...) asparagine glycan is linked to N247. Residues 276-296 form a helical membrane-spanning segment; that stretch reads TIQTYIPCTLIVVLSWVSFWI. Over 297-302 the chain is Cytoplasmic; it reads NKDAVP. A helical transmembrane segment spans residues 303–322; that stretch reads ARTSLGITTVLTMTTLSTIA. Over 323-334 the chain is Extracellular; the sequence is RKSLPKVSYVTA. Residues 335-359 form a helical membrane-spanning segment; it reads MDLFVSVCFIFVFSALVEYGTLHYF. The Cytoplasmic segment spans residues 360-443; that stretch reads VSNRKPSKDK…IHIRIAKMDS (84 aa). The interaction with GABARAP stretch occupies residues 425 to 442; that stretch reads RTGAWRHGRIHIRIAKMD. A helical membrane pass occupies residues 444 to 464; the sequence is YARIFFPTAFCLFNLVYWVSY. At 465-467 the chain is on the extracellular side; sequence LYL.

Belongs to the ligand-gated ion channel (TC 1.A.9) family. Gamma-aminobutyric acid receptor (TC 1.A.9.5) subfamily. GABRG2 sub-subfamily. In terms of assembly, heteropentamer, formed by a combination of alpha (GABRA1-6), beta (GABRB1-3), gamma (GABRG1-3), delta (GABRD), epsilon (GABRE), rho (GABRR1-3), pi (GABRP) and theta (GABRQ) chains, each subunit exhibiting distinct physiological and pharmacological properties. Interacts with GABARAP. Interacts with KIF21B. Identified in a complex of 720 kDa composed of LHFPL4, NLGN2, GABRA1, GABRB2, GABRG2 and GABRB3. Interacts with LHFPL4. Interacts with SHISA7; interaction leads to the regulation of GABA(A) receptor trafficking, channel deactivation kinetics and pharmacology. In terms of processing, palmitoylated by ZDHHC3/GODZ; required for the accumulation of GABA(A) receptors at the postsynaptic membrane of inhibitory GABAergic synapses. Post-translationally, glycosylated.

Its subcellular location is the postsynaptic cell membrane. The protein resides in the cell membrane. It is found in the cell projection. The protein localises to the dendrite. It localises to the cytoplasmic vesicle membrane. The enzyme catalyses chloride(in) = chloride(out). Its activity is regulated as follows. Allosterically activated by benzodiazepines. Activated by pentobarbital. Inhibited by the antagonist bicuculline. Inhibited by zinc ions. Potentiated by histamine. Functionally, gamma subunit of the heteropentameric ligand-gated chloride channel gated by gamma-aminobutyric acid (GABA), a major inhibitory neurotransmitter in the brain. GABA-gated chloride channels, also named GABA(A) receptors (GABAAR), consist of five subunits arranged around a central pore and contain GABA active binding site(s) located at the alpha and beta subunit interface(s). When activated by GABA, GABAARs selectively allow the flow of chloride anions across the cell membrane down their electrochemical gradient. Gamma-2/GABRG2-containing GABAARs are found at both synaptic and extrasynaptic sites. Chloride influx into the postsynaptic neuron following GABAAR opening decreases the neuron ability to generate a new action potential, thereby reducing nerve transmission. GABAARs containing alpha-1 and beta-2 or -3 subunits exhibit synaptogenic activity; the gamma-2 subunit being necessary but not sufficient to induce rapid synaptic contacts formation. Extrasynaptic gamma-2-containing receptors contribute to the tonic GABAergic inhibition. GABAARs function also as histamine receptor where histamine binds at the interface of two neighboring beta subunits and potentiates GABA response in a gamma-2 subunit-controlled manner. In Pongo abelii (Sumatran orangutan), this protein is Gamma-aminobutyric acid receptor subunit gamma-2 (GABRG2).